The sequence spans 127 residues: Ribosome-binding factor A (127 aa).

The protein belongs to the RbfA family. As to quaternary structure, monomer. Binds 30S ribosomal subunits, but not 50S ribosomal subunits or 70S ribosomes.

The protein localises to the cytoplasm. Its function is as follows. One of several proteins that assist in the late maturation steps of the functional core of the 30S ribosomal subunit. Associates with free 30S ribosomal subunits (but not with 30S subunits that are part of 70S ribosomes or polysomes). Required for efficient processing of 16S rRNA. May interact with the 5'-terminal helix region of 16S rRNA. The protein is Ribosome-binding factor A of Geobacillus kaustophilus (strain HTA426).